We begin with the raw amino-acid sequence, 252 residues long: tRNA pseudouridine synthase A (252 aa).

The active-site Nucleophile is the D54. Y112 contributes to the substrate binding site.

The protein belongs to the tRNA pseudouridine synthase TruA family. As to quaternary structure, homodimer.

The enzyme catalyses uridine(38/39/40) in tRNA = pseudouridine(38/39/40) in tRNA. Formation of pseudouridine at positions 38, 39 and 40 in the anticodon stem and loop of transfer RNAs. The protein is tRNA pseudouridine synthase A of Oenococcus oeni (strain ATCC BAA-331 / PSU-1).